A 1112-amino-acid polypeptide reads, in one-letter code: Zinc finger protein 654 (1112 aa).

The tract at residues 482–514 is disordered; sequence PSSSLKKRVDQQSVEEDQSTGETDPDDASVVQP. Positions 494-508 are enriched in acidic residues; sequence SVEEDQSTGETDPDD. C2H2-type zinc fingers lie at residues 566–588, 738–763, 779–801, 807–831, and 836–860; these read FACV…LKNH, FKCP…RTVH, GKCK…LNRH, YFCL…TKSH, and AQCS…EAQH. Disordered regions lie at residues 885–906 and 997–1018; these read FSNE…KYST and VESQ…NLTS. Composition is skewed to polar residues over residues 886–899 and 1002–1018; these read SNEN…VSTS and HSAL…NLTS. Ser-1107 and Ser-1111 each carry phosphoserine.

This sequence belongs to the krueppel C2H2-type zinc-finger protein family.

Its subcellular location is the nucleus. May be involved in transcriptional regulation. This Mus musculus (Mouse) protein is Zinc finger protein 654.